The chain runs to 194 residues: Molybdenum cofactor guanylyltransferase (194 aa).

GTP-binding positions include 12 to 14 (LAG), K25, N53, D70, and D100. D100 is a binding site for Mg(2+).

Belongs to the MobA family. In terms of assembly, monomer. It depends on Mg(2+) as a cofactor.

It is found in the cytoplasm. The catalysed reaction is Mo-molybdopterin + GTP + H(+) = Mo-molybdopterin guanine dinucleotide + diphosphate. Its function is as follows. Transfers a GMP moiety from GTP to Mo-molybdopterin (Mo-MPT) cofactor (Moco or molybdenum cofactor) to form Mo-molybdopterin guanine dinucleotide (Mo-MGD) cofactor. The chain is Molybdenum cofactor guanylyltransferase from Vibrio atlanticus (strain LGP32) (Vibrio splendidus (strain Mel32)).